The chain runs to 322 residues: Zinc finger C2HC domain-containing protein zchc-1A (322 aa).

2 C2HC/C3H-type zinc fingers span residues 9-38 (PTFP…LASL) and 119-148 (DYVQ…QATR). Zn(2+) contacts are provided by Cys-13, Cys-16, His-28, Cys-32, Cys-123, Cys-126, His-138, and Cys-142. The span at 150–159 (QGGNLKSSGG) shows a compositional bias: polar residues. A disordered region spans residues 150 to 322 (QGGNLKSSGG…SRNNSRSRIF (173 aa)). Basic and acidic residues predominate over residues 174–220 (NEGKKQESSSRNGSAERKPTTRGRDGSLLRARRDDSNDITSRRKSLD). 2 stretches are compositionally biased toward polar residues: residues 221–238 (TRTS…TSLS) and 264–274 (LQQSSTPQQRL). Residues 276–295 (TPASTTTTASRSGSRTSSRA) are compositionally biased toward low complexity. Over residues 296 to 305 (CPRDDSRDSR) the composition is skewed to basic and acidic residues. The span at 311 to 322 (NNSRNNSRSRIF) shows a compositional bias: low complexity.

It belongs to the ZC2HC1 family. Zn(2+) is required as a cofactor.

The protein is Zinc finger C2HC domain-containing protein zchc-1A of Caenorhabditis elegans.